The sequence spans 305 residues: Aquaporin-1 (305 aa).

A disordered region spans residues 1 to 34; the sequence is MSSNDSNDTDKQHTRLDPTGVDDAYIPPEQPETK. The Cytoplasmic portion of the chain corresponds to 1–48; sequence MSSNDSNDTDKQHTRLDPTGVDDAYIPPEQPETKHHRFKISRDTLRDH. A helical transmembrane segment spans residues 49–69; sequence FIAAVGEFCGTFMFLWCAYVI. The Extracellular portion of the chain corresponds to 70–91; it reads CNVANHDVALVAAPDGSHPGQL. A helical membrane pass occupies residues 92–112; the sequence is IMIAIGFGFSVMFSIWCFAGV. The Cytoplasmic portion of the chain corresponds to 113-136; sequence SGGALNPAMSLSLCLARAVSPTRC. The NPA 1 motif lies at 118–120; that stretch reads NPA. Residues 137–157 traverse the membrane as a helical segment; that stretch reads VVMWVSQIVAGMAAGGAASAM. Residues 158–176 are Extracellular-facing; it reads TPGEVLFANSLGLGCSRTR. A helical transmembrane segment spans residues 177–197; sequence GLFLEMFGTAILCLTVLMTAV. At 198 to 203 the chain is on the cytoplasmic side; that stretch reads EKRETN. Residues 204-224 form a helical membrane-spanning segment; that stretch reads FMAALPIGISLFIAHVALTAY. The Extracellular portion of the chain corresponds to 225-248; it reads TGTGVNPARSLGAAVAARYFPHYH. An NPA 2 motif is present at residues 230–232; it reads NPA. Residues 249–269 form a helical membrane-spanning segment; the sequence is WIYWIGTLLGSILAWSVWQLL. At 270 to 305 the chain is on the cytoplasmic side; that stretch reads QILDYTTYVTAEKAASTKEKAQKKGETSSSSAVAEV. Over residues 286-295 the composition is skewed to basic and acidic residues; it reads TKEKAQKKGE. A disordered region spans residues 286–305; the sequence is TKEKAQKKGETSSSSAVAEV. A compositionally biased stretch (polar residues) spans 296 to 305; it reads TSSSSAVAEV.

This sequence belongs to the MIP/aquaporin (TC 1.A.8) family.

Its subcellular location is the endoplasmic reticulum membrane. The protein localises to the cell membrane. Its function is as follows. Water channel required to facilitate the transport of water across membranes. Involved in sporulation, freeze tolerance and osmotolerance. Is non-functional in most laboratory strains. In Saccharomyces cerevisiae (strain ATCC 204508 / S288c) (Baker's yeast), this protein is Aquaporin-1 (AQY1).